A 442-amino-acid chain; its full sequence is Hydrolase phmG (442 aa).

S259 serves as the catalytic Nucleophile.

The protein belongs to the AB hydrolase superfamily. FUS2 hydrolase family. Homodimer.

It functions in the pathway mycotoxin biosynthesis. Functionally, hydrolyase; part of the gene cluster that mediates the biosynthesis of the mycotoxins phomacins, leucine-derived cytochalasans with potent actin polymerization-inhibitory activities and monocot-specific antigerminative activities. The first step in the pathway is catalyzed by the hybrid PKS-NRPS phmA, assisted by the enoyl reductase phmE, that are responsible for fusion of the leucine precursor and the polyketide backbone to produce a 2-pyrrolidone intermediate. The polyketide synthase module (PKS) of phmA is responsible for the synthesis of the polyketide backbone and the downstream nonribosomal peptide synthetase (NRPS) amidates the carboxyl end of the polyketide with the leucine precursor. Because phmA lacks a designated enoylreductase (ER) domain, the required activity is provided the enoyl reductase phmE. Reduction by the hydrolyase phmG, followed by dehydration and intra-molecular Diels-Alder cyclization by the Diels-Alderase phmD then yield the required isoindolone-fused macrocycle. A number of oxidative steps catalyzed by the tailoring cytochrome P450 monooxygenase phmB, the FAD-linked oxidoreductase phmC and the short-chain dehydrogenase/reductase phmF, are further required to afford the final products, phomacin D and phomacin E. This is Hydrolase phmG from Phaeosphaeria nodorum (strain SN15 / ATCC MYA-4574 / FGSC 10173) (Glume blotch fungus).